Consider the following 216-residue polypeptide: LHFPL tetraspan subfamily member 3 protein (216 aa).

4 helical membrane passes run 22–42 (IGVL…VCFV), 96–116 (FFIG…ALFF), 126–146 (ICGW…MIYP), and 177–197 (ILAI…FVLG).

It belongs to the LHFP family.

The protein localises to the membrane. This is LHFPL tetraspan subfamily member 3 protein from Danio rerio (Zebrafish).